A 495-amino-acid chain; its full sequence is Monoamine oxidase N (495 aa).

A compositionally biased stretch (polar residues) spans 1–19 (MTSRDGYQWTPETGLTQGV). The segment at 1–23 (MTSRDGYQWTPETGLTQGVPSLG) is disordered. The short motif at 493 to 495 (ARL) is the Microbody targeting signal element.

This sequence belongs to the flavin monoamine oxidase family. FAD serves as cofactor.

The protein resides in the peroxisome. It catalyses the reaction a secondary aliphatic amine + O2 + H2O = a primary amine + an aldehyde + H2O2. The sequence is that of Monoamine oxidase N (maoN) from Aspergillus niger.